A 55-amino-acid polypeptide reads, in one-letter code: Large ribosomal subunit protein bL33 (55 aa).

The protein belongs to the bacterial ribosomal protein bL33 family.

The polypeptide is Large ribosomal subunit protein bL33 (Acidiphilium cryptum (strain JF-5)).